The chain runs to 429 residues: Polypyrimidine tract-binding protein homolog 2 (429 aa).

Residue serine 2 is modified to N-acetylserine. RRM domains lie at lysine 18 to arginine 96, glycine 110 to histidine 197, and serine 243 to histidine 323. The tract at residues asparagine 331–histidine 429 is disordered. A compositionally biased stretch (low complexity) spans glycine 367–tryptophan 381. Gly residues predominate over residues valine 382 to histidine 397.

Its subcellular location is the nucleus. Plays a role in pre-mRNA splicing. Binds to the polypyrimidine tract of introns. May promote the binding of U2 snRNP to pre-mRNA. The chain is Polypyrimidine tract-binding protein homolog 2 from Arabidopsis thaliana (Mouse-ear cress).